Reading from the N-terminus, the 192-residue chain is Lipid A acyltransferase PagP (192 aa).

The N-terminal stretch at 1–24 (MWLRFCAPALMAWYWVFFPSTSQA) is a signal peptide. Residues H63, D106, and S107 contribute to the active site.

The protein belongs to the lipid A palmitoyltransferase family. As to quaternary structure, homodimer.

The protein resides in the cell outer membrane. The enzyme catalyses a lipid A + a 1,2-diacyl-sn-glycero-3-phosphocholine = a hepta-acyl lipid A + a 2-acyl-sn-glycero-3-phosphocholine. It carries out the reaction a lipid IVA + a 1,2-diacyl-sn-glycero-3-phosphocholine = a lipid IVB + a 2-acyl-sn-glycero-3-phosphocholine. It catalyses the reaction a lipid IIA + a 1,2-diacyl-sn-glycero-3-phosphocholine = a lipid IIB + a 2-acyl-sn-glycero-3-phosphocholine. Transfers a fatty acid residue from the sn-1 position of a phospholipid to the N-linked hydroxyfatty acid chain on the proximal unit of lipid A or its precursors. This Musicola paradisiaca (strain Ech703) (Dickeya paradisiaca) protein is Lipid A acyltransferase PagP.